A 62-amino-acid polypeptide reads, in one-letter code: Photosystem II reaction center protein Z (62 aa).

Helical transmembrane passes span 8–28 (LVFILVIFSTLLVVGIPVTFA) and 41–61 (YTGAGIWTGLVLITGLVNSFI).

This sequence belongs to the PsbZ family. PSII is composed of 1 copy each of membrane proteins PsbA, PsbB, PsbC, PsbD, PsbE, PsbF, PsbH, PsbI, PsbJ, PsbK, PsbL, PsbM, PsbT, sbX, PsbY, PsbZ, Psb30/Ycf12, at least 3 peripheral proteins of the oxygen-evolving complex and a large number of cofactors. It forms dimeric complexes.

It localises to the plastid. The protein resides in the chloroplast thylakoid membrane. May control the interaction of photosystem II (PSII) cores with the light-harvesting antenna, regulates electron flow through the 2 photosystem reaction centers. PSII is a light-driven water plastoquinone oxidoreductase, using light energy to abstract electrons from H(2)O, generating a proton gradient subsequently used for ATP formation. The sequence is that of Photosystem II reaction center protein Z from Gracilaria tenuistipitata var. liui (Red alga).